Here is a 465-residue protein sequence, read N- to C-terminus: Gamma-aminobutyric acid receptor subunit gamma-1 (465 aa).

Positions 1 to 35 are cleaved as a signal peptide; it reads MGPLKAFLFSPFLLRSQSRGVRLVFLLLTLHLGNC. The Extracellular portion of the chain corresponds to 36–273; sequence VDKADDEDDE…FDLSRRMGYF (238 aa). Residues Asn50 and Asn127 are each glycosylated (N-linked (GlcNAc...) asparagine). Residues Cys188 and Cys202 are joined by a disulfide bond. Asn245 carries an N-linked (GlcNAc...) asparagine glycan. The chain crosses the membrane as a helical span at residues 274-294; that stretch reads TIQTYIPCILTVVLSWVSFWI. Residues 295-300 lie on the Cytoplasmic side of the membrane; the sequence is NKDAVP. Residues 301–320 traverse the membrane as a helical segment; the sequence is ARTSLGITTVLTMTTLSTIA. At 321-328 the chain is on the extracellular side; sequence RKSLPKVS. Residues 329–349 traverse the membrane as a helical segment; the sequence is YVTAMDLFVSVCFIFVFAALM. Residues 350 to 444 lie on the Cytoplasmic side of the membrane; that stretch reads EYGTLHYFTS…RIAKIDSYSR (95 aa). A helical transmembrane segment spans residues 445–465; that stretch reads IFFPTAFALFNLVYWVGYLYL.

This sequence belongs to the ligand-gated ion channel (TC 1.A.9) family. Gamma-aminobutyric acid receptor (TC 1.A.9.5) subfamily. GABRG1 sub-subfamily. Heteropentamer, formed by a combination of alpha (GABRA1-6), beta (GABRB1-3), gamma (GABRG1-3), delta (GABRD), epsilon (GABRE), rho (GABRR1-3), pi (GABRP) and theta (GABRQ) chains, each subunit exhibiting distinct physiological and pharmacological properties. May be palmitoylated.

The protein resides in the postsynaptic cell membrane. It localises to the cell membrane. It carries out the reaction chloride(in) = chloride(out). Functionally, gamma subunit of the heteropentameric ligand-gated chloride channel gated by gamma-aminobutyric acid (GABA), a major inhibitory neurotransmitter in the brain. GABA-gated chloride channels, also named GABA(A) receptors (GABAAR), consist of five subunits arranged around a central pore and contain GABA active binding site(s) located at the alpha and beta subunit interface(s). When activated by GABA, GABAARs selectively allow the flow of chloride anions across the cell membrane down their electrochemical gradient. Chloride influx into the postsynaptic neuron following GABAAR opening decreases the neuron ability to generate a new action potential, thereby reducing nerve transmission. This Homo sapiens (Human) protein is Gamma-aminobutyric acid receptor subunit gamma-1.